Consider the following 188-residue polypeptide: CyanoP (188 aa).

The first 23 residues, 1-23 (MLKKSLSTAVVLVTLLLSFTLTA), serve as a signal peptide directing secretion. C24 carries N-palmitoyl cysteine lipidation. A lipid anchor (S-diacylglycerol cysteine) is attached at C24.

The protein belongs to the PsbP family. CyanoP subfamily. In terms of assembly, monomer. Present in about 3% of photosystem II (PSII) preparations. Purifies with partially assembled PSII complexes, in addition to a small amount of monomeric and dimeric PSII, and trimeric PSI.

It localises to the cellular thylakoid membrane. Plays a role in the early stages of photosystem II (PSII) assembly; binds to D2 (psbD) and may facilitate its incorporation into PSII. Required for optimal photoautotrophic growth in the absence of Ca(2+) or Cl(-), functions in optimizing PSII water oxidation/O(2) evolving activity. Might be involved in assembly of the oxygen evolving complex. The protein is CyanoP of Synechocystis sp. (strain ATCC 27184 / PCC 6803 / Kazusa).